The primary structure comprises 214 residues: Octanoyltransferase (214 aa).

In terms of domain architecture, BPL/LPL catalytic spans 32-207 (EDTLDEIWLV…NLLALLNHPP (176 aa)). Residues 71-78 (RGGQVTYH), 138-140 (SLG), and 151-153 (GLA) contribute to the substrate site. The active-site Acyl-thioester intermediate is the cysteine 169.

This sequence belongs to the LipB family.

The protein resides in the cytoplasm. It carries out the reaction octanoyl-[ACP] + L-lysyl-[protein] = N(6)-octanoyl-L-lysyl-[protein] + holo-[ACP] + H(+). It functions in the pathway protein modification; protein lipoylation via endogenous pathway; protein N(6)-(lipoyl)lysine from octanoyl-[acyl-carrier-protein]: step 1/2. Its function is as follows. Catalyzes the transfer of endogenously produced octanoic acid from octanoyl-acyl-carrier-protein onto the lipoyl domains of lipoate-dependent enzymes. Lipoyl-ACP can also act as a substrate although octanoyl-ACP is likely to be the physiological substrate. The protein is Octanoyltransferase of Klebsiella pneumoniae (strain 342).